Reading from the N-terminus, the 128-residue chain is Protein BEX1 (128 aa).

The tract at residues Met-1–Leu-37 is disordered. Phosphoserine is present on Ser-105. Residues Ser-107–Pro-128 are disordered. A compositionally biased stretch (basic and acidic residues) spans Pro-115–Pro-128. A his cluster region spans residues His-117–His-121. Cys-125 lines the Zn(2+) pocket.

This sequence belongs to the BEX family. In terms of assembly, interacts with neurotrophin receptor p75NTR/NGFR. Interacts with OMP. In terms of processing, phosphorylated. Phosphorylation of Ser-105 protects it from the proteasome. Post-translationally, ubiquitinated. Degraded by the proteasome.

It is found in the nucleus. It localises to the cytoplasm. Signaling adapter molecule involved in p75NTR/NGFR signaling. Plays a role in cell cycle progression and neuronal differentiation. Inhibits neuronal differentiation in response to nerve growth factor (NGF). May act as a link between the cell cycle and neurotrophic factor signaling, possibly by functioning as an upstream modulator of receptor signaling, coordinating biological responses to external signals with internal cellular states. In absence of reductive stress, acts as a pseudosubstrate for the CRL2(FEM1B) complex: associates with FEM1B via zinc, thereby preventing association between FEM1B and its substrates. This Macaca fascicularis (Crab-eating macaque) protein is Protein BEX1 (BEX1).